A 705-amino-acid chain; its full sequence is Elongation factor G (705 aa).

A tr-type G domain is found at 7–287 (HLTRNIGIMA…YVCAFLPSPL (281 aa)). Residues 16–23 (AHIDAGKT), 84–88 (DTPGH), and 138–141 (NKMD) contribute to the GTP site.

The protein belongs to the TRAFAC class translation factor GTPase superfamily. Classic translation factor GTPase family. EF-G/EF-2 subfamily.

The protein resides in the cytoplasm. Functionally, catalyzes the GTP-dependent ribosomal translocation step during translation elongation. During this step, the ribosome changes from the pre-translocational (PRE) to the post-translocational (POST) state as the newly formed A-site-bound peptidyl-tRNA and P-site-bound deacylated tRNA move to the P and E sites, respectively. Catalyzes the coordinated movement of the two tRNA molecules, the mRNA and conformational changes in the ribosome. This chain is Elongation factor G, found in Bacteroides thetaiotaomicron (strain ATCC 29148 / DSM 2079 / JCM 5827 / CCUG 10774 / NCTC 10582 / VPI-5482 / E50).